The following is a 420-amino-acid chain: WD repeat-containing protein 21 (420 aa).

The short motif at 73–75 (RQF) is the DDB-boX element. 3 WD repeats span residues 251-289 (QSKGDVFSLKYLGDNLVIAGCRNKSVLVYDLRTKKECVQ), 293-332 (HGSSICSMQNLDFSQPKLLVSGLESKISLYDCRFLQSKKR), and 341-383 (GHSN…PFKE).

It is found in the cytoplasm. It localises to the nucleus. The sequence is that of WD repeat-containing protein 21 (wdr21) from Schizosaccharomyces pombe (strain 972 / ATCC 24843) (Fission yeast).